Consider the following 125-residue polypeptide: Large ribosomal subunit protein bL12 (125 aa).

Belongs to the bacterial ribosomal protein bL12 family. As to quaternary structure, homodimer. Part of the ribosomal stalk of the 50S ribosomal subunit. Forms a multimeric L10(L12)X complex, where L10 forms an elongated spine to which 2 to 4 L12 dimers bind in a sequential fashion. Binds GTP-bound translation factors.

In terms of biological role, forms part of the ribosomal stalk which helps the ribosome interact with GTP-bound translation factors. Is thus essential for accurate translation. The protein is Large ribosomal subunit protein bL12 of Syntrophomonas wolfei subsp. wolfei (strain DSM 2245B / Goettingen).